A 187-amino-acid polypeptide reads, in one-letter code: Large ribosomal subunit protein bL9 (187 aa).

The interval 168–187 is disordered; that stretch reads EEAPAEEDVAAEETSEAAEA.

It belongs to the bacterial ribosomal protein bL9 family.

In terms of biological role, binds to the 23S rRNA. The chain is Large ribosomal subunit protein bL9 from Paramagnetospirillum magneticum (strain ATCC 700264 / AMB-1) (Magnetospirillum magneticum).